A 76-amino-acid polypeptide reads, in one-letter code: Large ribosomal subunit protein bL31 (76 aa).

The protein belongs to the bacterial ribosomal protein bL31 family. Type A subfamily. In terms of assembly, part of the 50S ribosomal subunit.

Binds the 23S rRNA. The chain is Large ribosomal subunit protein bL31 (rpmE) from Pelagibacter ubique (strain HTCC1062).